Here is a 132-residue protein sequence, read N- to C-terminus: T-cell receptor alpha chain V region CTL-F3 (132 aa).

The first 22 residues, 1-22 (MNMRPDTCSVLVLLLMLRRNNG), serve as a signal peptide directing secretion. A v segment region spans residues 23 to 114 (DSVTQTEGLV…DSALYYCALS (92 aa)). A glycan (N-linked (GlcNAc...) asparagine) is linked at Asn43. A disulfide bridge links Cys44 with Cys111. Positions 115 to 132 (NAGAKLTFGGGTRLTVRP) are j segment.

The chain is T-cell receptor alpha chain V region CTL-F3 from Mus musculus (Mouse).